Reading from the N-terminus, the 207-residue chain is Thiamine-phosphate synthase (207 aa).

Residues 36–40 (QLRLK) and Asn68 contribute to the 4-amino-2-methyl-5-(diphosphooxymethyl)pyrimidine site. Residues Asp69 and Asp88 each coordinate Mg(2+). Thr107 contacts 4-amino-2-methyl-5-(diphosphooxymethyl)pyrimidine. 134-136 (TGT) is a binding site for 2-[(2R,5Z)-2-carboxy-4-methylthiazol-5(2H)-ylidene]ethyl phosphate. Position 137 (Lys137) interacts with 4-amino-2-methyl-5-(diphosphooxymethyl)pyrimidine. Gly164 is a 2-[(2R,5Z)-2-carboxy-4-methylthiazol-5(2H)-ylidene]ethyl phosphate binding site.

It belongs to the thiamine-phosphate synthase family. Requires Mg(2+) as cofactor.

It carries out the reaction 2-[(2R,5Z)-2-carboxy-4-methylthiazol-5(2H)-ylidene]ethyl phosphate + 4-amino-2-methyl-5-(diphosphooxymethyl)pyrimidine + 2 H(+) = thiamine phosphate + CO2 + diphosphate. The enzyme catalyses 2-(2-carboxy-4-methylthiazol-5-yl)ethyl phosphate + 4-amino-2-methyl-5-(diphosphooxymethyl)pyrimidine + 2 H(+) = thiamine phosphate + CO2 + diphosphate. It catalyses the reaction 4-methyl-5-(2-phosphooxyethyl)-thiazole + 4-amino-2-methyl-5-(diphosphooxymethyl)pyrimidine + H(+) = thiamine phosphate + diphosphate. The protein operates within cofactor biosynthesis; thiamine diphosphate biosynthesis; thiamine phosphate from 4-amino-2-methyl-5-diphosphomethylpyrimidine and 4-methyl-5-(2-phosphoethyl)-thiazole: step 1/1. Functionally, condenses 4-methyl-5-(beta-hydroxyethyl)thiazole monophosphate (THZ-P) and 2-methyl-4-amino-5-hydroxymethyl pyrimidine pyrophosphate (HMP-PP) to form thiamine monophosphate (TMP). This chain is Thiamine-phosphate synthase, found in Rhodospirillum centenum (strain ATCC 51521 / SW).